A 318-amino-acid chain; its full sequence is Taste receptor type 2 member 60 (318 aa).

The Extracellular segment spans residues 1-7 (MNGDHMV). The chain crosses the membrane as a helical span at residues 8–28 (LGSSVTDKKAIILVTILLLLR). Residues 29 to 40 (LVAIAGNGFIIA) lie on the Cytoplasmic side of the membrane. Residues 41-61 (ALGVEWVLRRMLLPCDXLLVS) traverse the membrane as a helical segment. Over 62–88 (LGASRFCLQSVVMGKTIYVFLHPMAFP) the chain is Extracellular. The chain crosses the membrane as a helical span at residues 89–109 (YNPVLQFLAFQWDFLNAATLW). The Cytoplasmic portion of the chain corresponds to 110-128 (FSTWLSVFYCVKIAAFTHP). The chain crosses the membrane as a helical span at residues 129–149 (VFLWLKHKLSGWLPWILFSSV). The Extracellular segment spans residues 150 to 183 (GLSSFTTILFFIGNHRMYQNYLRNHLQPWNITGN). Asparagine 179 is a glycosylation site (N-linked (GlcNAc...) asparagine). Residues 184–204 (SIRSYCEKFYLFPLKMITWTM) form a helical membrane-spanning segment. Residues 205–234 (PTAVFFICMILLITSLGRHMKKALLTTSGF) are Cytoplasmic-facing. Residues 235–255 (REPSMQAHIKALLALLSFAML) form a helical membrane-spanning segment. Residues 256 to 264 (FISYFLSLV) are Extracellular-facing. The helical transmembrane segment at 265 to 285 (FSAAGIFPPLDFKFWVWESVI) threads the bilayer. Over 286-318 (YLCAAVHPIILLFSNCRLRAVLKSCRSSRCGTP) the chain is Cytoplasmic.

The protein belongs to the G-protein coupled receptor T2R family.

Its subcellular location is the membrane. In terms of biological role, receptor that may play a role in the perception of bitterness and is gustducin-linked. May play a role in sensing the chemical composition of the gastrointestinal content. The activity of this receptor may stimulate alpha gustducin, mediate PLC-beta-2 activation and lead to the gating of TRPM5. The chain is Taste receptor type 2 member 60 (TAS2R60) from Gorilla gorilla gorilla (Western lowland gorilla).